Consider the following 671-residue polypeptide: DNA ligase (671 aa).

NAD(+)-binding positions include 32–36 (DVEYD), 81–82 (SL), and Glu114. The active-site N6-AMP-lysine intermediate is the Lys116. The NAD(+) site is built by Arg137, Glu175, Lys292, and Lys316. Residues Cys410, Cys413, Cys428, and Cys434 each coordinate Zn(2+). One can recognise a BRCT domain in the interval 592 to 671 (EKNNYFSGKN…AEFYQILGIR (80 aa)).

This sequence belongs to the NAD-dependent DNA ligase family. LigA subfamily. The cofactor is Mg(2+). Mn(2+) is required as a cofactor.

The enzyme catalyses NAD(+) + (deoxyribonucleotide)n-3'-hydroxyl + 5'-phospho-(deoxyribonucleotide)m = (deoxyribonucleotide)n+m + AMP + beta-nicotinamide D-nucleotide.. DNA ligase that catalyzes the formation of phosphodiester linkages between 5'-phosphoryl and 3'-hydroxyl groups in double-stranded DNA using NAD as a coenzyme and as the energy source for the reaction. It is essential for DNA replication and repair of damaged DNA. In Baumannia cicadellinicola subsp. Homalodisca coagulata, this protein is DNA ligase.